Reading from the N-terminus, the 197-residue chain is Recombination protein RecR (197 aa).

Residues 56-71 form a C4-type zinc finger; that stretch reads CERCNTFTETEICQRC. The region spanning 79–174 is the Toprim domain; it reads SLLCVVEMPA…RVSRLSRGVP (96 aa).

The protein belongs to the RecR family.

Functionally, may play a role in DNA repair. It seems to be involved in an RecBC-independent recombinational process of DNA repair. It may act with RecF and RecO. In Aromatoleum aromaticum (strain DSM 19018 / LMG 30748 / EbN1) (Azoarcus sp. (strain EbN1)), this protein is Recombination protein RecR.